Here is a 256-residue protein sequence, read N- to C-terminus: Putative F-box protein At3g51171 (256 aa).

One can recognise an F-box domain in the interval M1–H44.

This Arabidopsis thaliana (Mouse-ear cress) protein is Putative F-box protein At3g51171.